The following is a 451-amino-acid chain: ESX secretion system protein YukC (451 aa).

Residues Ile221–Phe241 traverse the membrane as a helical segment. Residues Asp362–Lys447 are a coiled coil. Residues Leu376 to Asn386 are compositionally biased toward basic and acidic residues. The segment at Leu376–Lys451 is disordered. The segment covering Lys387–Asp397 has biased composition (polar residues). The span at Asp406–Lys451 shows a compositional bias: basic and acidic residues.

It belongs to the EssB family.

Its subcellular location is the cell membrane. In terms of biological role, required for YukE secretion. Probable component or regulator of the ESX/ESAT-6-like secretion system (BsEss). Required to deliver LXG toxins to target cells. This chain is ESX secretion system protein YukC (yukC), found in Bacillus subtilis (strain 168).